Here is a 301-residue protein sequence, read N- to C-terminus: Diaminopimelate epimerase (301 aa).

Substrate contacts are provided by asparagine 15, glutamine 47, and asparagine 67. Cysteine 76 acts as the Proton donor in catalysis. Substrate contacts are provided by residues 77–78, asparagine 163, asparagine 197, and 215–216; these read GN and ER. Cysteine 224 serves as the catalytic Proton acceptor. Residue 225–226 coordinates substrate; it reads GS.

The protein belongs to the diaminopimelate epimerase family. As to quaternary structure, homodimer.

It is found in the cytoplasm. The catalysed reaction is (2S,6S)-2,6-diaminopimelate = meso-2,6-diaminopimelate. Its pathway is amino-acid biosynthesis; L-lysine biosynthesis via DAP pathway; DL-2,6-diaminopimelate from LL-2,6-diaminopimelate: step 1/1. Functionally, catalyzes the stereoinversion of LL-2,6-diaminopimelate (L,L-DAP) to meso-diaminopimelate (meso-DAP), a precursor of L-lysine and an essential component of the bacterial peptidoglycan. The protein is Diaminopimelate epimerase of Rhizobium meliloti (strain 1021) (Ensifer meliloti).